Here is a 57-residue protein sequence, read N- to C-terminus: Large ribosomal subunit protein bL32 (57 aa).

The tract at residues 1-25 is disordered; that stretch reads MATPSNKNSKSHKRNRRGHIGLNVP. Basic residues predominate over residues 9–19; sequence SKSHKRNRRGH.

It belongs to the bacterial ribosomal protein bL32 family.

The sequence is that of Large ribosomal subunit protein bL32 from Leuconostoc mesenteroides subsp. mesenteroides (strain ATCC 8293 / DSM 20343 / BCRC 11652 / CCM 1803 / JCM 6124 / NCDO 523 / NBRC 100496 / NCIMB 8023 / NCTC 12954 / NRRL B-1118 / 37Y).